A 419-amino-acid polypeptide reads, in one-letter code: 3-isopropylmalate dehydratase large subunit (419 aa).

[4Fe-4S] cluster contacts are provided by C300, C360, and C363.

The protein belongs to the aconitase/IPM isomerase family. LeuC type 2 subfamily. Heterodimer of LeuC and LeuD. Requires [4Fe-4S] cluster as cofactor.

The enzyme catalyses (2R,3S)-3-isopropylmalate = (2S)-2-isopropylmalate. The protein operates within amino-acid biosynthesis; L-leucine biosynthesis; L-leucine from 3-methyl-2-oxobutanoate: step 2/4. Functionally, catalyzes the isomerization between 2-isopropylmalate and 3-isopropylmalate, via the formation of 2-isopropylmaleate. The chain is 3-isopropylmalate dehydratase large subunit from Nitratidesulfovibrio vulgaris (strain DP4) (Desulfovibrio vulgaris).